Reading from the N-terminus, the 291-residue chain is Putative phosphatase MG263 (291 aa).

The active-site Nucleophile is Asp-11. Asp-11 is a binding site for Mg(2+). Leu-12 lines the phosphate pocket. Residue Asp-13 coordinates Mg(2+). Phosphate-binding positions include 60–61 (TG) and Lys-217. Mg(2+) is bound at residue Asp-241. Asn-244 is a phosphate binding site.

The protein belongs to the HAD-like hydrolase superfamily. Cof family. Mg(2+) is required as a cofactor.

This is Putative phosphatase MG263 from Mycoplasma genitalium (strain ATCC 33530 / DSM 19775 / NCTC 10195 / G37) (Mycoplasmoides genitalium).